Here is a 270-residue protein sequence, read N- to C-terminus: Putative phosphoenolpyruvate synthase regulatory protein (270 aa).

150 to 157 (GVSRCGKT) contributes to the ADP binding site.

It belongs to the pyruvate, phosphate/water dikinase regulatory protein family. PSRP subfamily.

It catalyses the reaction [pyruvate, water dikinase] + ADP = [pyruvate, water dikinase]-phosphate + AMP + H(+). The enzyme catalyses [pyruvate, water dikinase]-phosphate + phosphate + H(+) = [pyruvate, water dikinase] + diphosphate. Functionally, bifunctional serine/threonine kinase and phosphorylase involved in the regulation of the phosphoenolpyruvate synthase (PEPS) by catalyzing its phosphorylation/dephosphorylation. This is Putative phosphoenolpyruvate synthase regulatory protein from Shewanella frigidimarina (strain NCIMB 400).